Reading from the N-terminus, the 195-residue chain is Heavy metal-associated isoprenylated plant protein 18 (195 aa).

Disordered stretches follow at residues 36–76 (DVVQ…KPET) and 145–172 (EKEK…NPSS). Basic and acidic residues-rich tracts occupy residues 47 to 76 (TVTK…KPET) and 145 to 157 (EKEK…ITKD). One can recognise an HMA domain in the interval 78 to 149 (TRKLEIHIAF…RIVKMEKEKK (72 aa)). Cys192 carries the post-translational modification Cysteine methyl ester. Cys192 is lipidated: S-farnesyl cysteine. Positions 193–195 (SIS) are cleaved as a propeptide — removed in mature form.

This sequence belongs to the HIPP family.

Its function is as follows. Probable heavy-metal-binding protein. Required for female gametophyte development and function. The polypeptide is Heavy metal-associated isoprenylated plant protein 18 (Arabidopsis thaliana (Mouse-ear cress)).